The sequence spans 216 residues: NKG2-D type II integral membrane protein (216 aa).

Residues 1–51 (MGWIRGRRSRHSWEMSEFHNYNLDLKKSDFSTRWQKQRCPVVKSKCRENAS) are Cytoplasmic-facing. The helical; Signal-anchor for type II membrane protein transmembrane segment at 52–72 (PFFFCCFIAVAMGIRFIIMVT) threads the bilayer. The Extracellular segment spans residues 73–216 (IWSAVFLNSL…NTYICMQRTV (144 aa)). Disulfide bonds link cysteine 96/cysteine 105, cysteine 99/cysteine 110, cysteine 127/cysteine 211, and cysteine 189/cysteine 203. The region spanning 98–213 (PCPKNWICYK…STPNTYICMQ (116 aa)) is the C-type lectin domain. Residues asparagine 131, asparagine 163, and asparagine 202 are each glycosylated (N-linked (GlcNAc...) asparagine).

Homodimer; disulfide-linked. Heterohexamer composed of two subunits of KLRK1 and four subunits of HCST/DAP10. Interacts (via transmembrane domain) with HCST/DAP10 (via transmembrane domain); the interaction is required for KLRK1 NK cell surface and induces NK cell-mediated cytotoxicity. Does not interact with TYROBP. Interacts with CEACAM1; recruits PTPN6 that dephosphorylates VAV1. In terms of tissue distribution, expressed in natural killer (NK) cells, CD8(+) alpha-beta and gamma-delta T-cells. Expressed on essentially all CD56+CD3- NK cells from freshly isolated PBMC. Expressed in interferon-producing killer dendritic cells (IKDCs).

The protein resides in the cell membrane. In terms of biological role, functions as an activating and costimulatory receptor involved in immunosurveillance upon binding to various cellular stress-inducible ligands displayed at the surface of autologous tumor cells and virus-infected cells. Provides both stimulatory and costimulatory innate immune responses on activated killer (NK) cells, leading to cytotoxic activity. Acts as a costimulatory receptor for T-cell receptor (TCR) in CD8(+) T-cell-mediated adaptive immune responses by amplifying T-cell activation. Stimulates perforin-mediated elimination of ligand-expressing tumor cells. Signaling involves calcium influx, culminating in the expression of TNF-alpha. Participates in NK cell-mediated bone marrow graft rejection. May play a regulatory role in differentiation and survival of NK cells. Binds to ligands belonging to various subfamilies of MHC class I-related glycoproteins including MICA, MICB, RAET1E, RAET1G, RAET1L/ULBP6, ULBP1, ULBP2, ULBP3 (ULBP2&gt;ULBP1&gt;ULBP3) and ULBP4. This Homo sapiens (Human) protein is NKG2-D type II integral membrane protein (KLRK1).